A 456-amino-acid polypeptide reads, in one-letter code: Bifunctional protein GlmU (456 aa).

Positions 1–228 (MPQNTLNIVI…SHLAAGVNNK (228 aa)) are pyrophosphorylase. UDP-N-acetyl-alpha-D-glucosamine-binding positions include 11–14 (LAAG), K25, Q75, 80–81 (GT), 102–104 (YGD), G138, E153, N168, and N226. D104 is a binding site for Mg(2+). N226 provides a ligand contact to Mg(2+). Residues 229-249 (LQLTELERIFQTEQAQELLKA) are linker. Positions 250 to 456 (GVTLRDPARF…GWVRPEKDKQ (207 aa)) are N-acetyltransferase. Residues R332 and K350 each contribute to the UDP-N-acetyl-alpha-D-glucosamine site. H362 (proton acceptor) is an active-site residue. The UDP-N-acetyl-alpha-D-glucosamine site is built by Y365 and N376. Acetyl-CoA is bound by residues A379, 385–386 (NY), S404, A422, and R439.

In the N-terminal section; belongs to the N-acetylglucosamine-1-phosphate uridyltransferase family. It in the C-terminal section; belongs to the transferase hexapeptide repeat family. As to quaternary structure, homotrimer. Mg(2+) is required as a cofactor.

It is found in the cytoplasm. The enzyme catalyses alpha-D-glucosamine 1-phosphate + acetyl-CoA = N-acetyl-alpha-D-glucosamine 1-phosphate + CoA + H(+). It carries out the reaction N-acetyl-alpha-D-glucosamine 1-phosphate + UTP + H(+) = UDP-N-acetyl-alpha-D-glucosamine + diphosphate. It participates in nucleotide-sugar biosynthesis; UDP-N-acetyl-alpha-D-glucosamine biosynthesis; N-acetyl-alpha-D-glucosamine 1-phosphate from alpha-D-glucosamine 6-phosphate (route II): step 2/2. It functions in the pathway nucleotide-sugar biosynthesis; UDP-N-acetyl-alpha-D-glucosamine biosynthesis; UDP-N-acetyl-alpha-D-glucosamine from N-acetyl-alpha-D-glucosamine 1-phosphate: step 1/1. The protein operates within bacterial outer membrane biogenesis; LPS lipid A biosynthesis. In terms of biological role, catalyzes the last two sequential reactions in the de novo biosynthetic pathway for UDP-N-acetylglucosamine (UDP-GlcNAc). The C-terminal domain catalyzes the transfer of acetyl group from acetyl coenzyme A to glucosamine-1-phosphate (GlcN-1-P) to produce N-acetylglucosamine-1-phosphate (GlcNAc-1-P), which is converted into UDP-GlcNAc by the transfer of uridine 5-monophosphate (from uridine 5-triphosphate), a reaction catalyzed by the N-terminal domain. This chain is Bifunctional protein GlmU, found in Neisseria meningitidis serogroup B (strain ATCC BAA-335 / MC58).